The following is a 453-amino-acid chain: Tubulin beta-2 chain (453 aa).

Residues Gln11, Glu71, Ser140, Gly144, Thr145, Gly146, Asn206, and Asn228 each coordinate GTP. Glu71 contributes to the Mg(2+) binding site.

This sequence belongs to the tubulin family. In terms of assembly, dimer of alpha and beta chains. A typical microtubule is a hollow water-filled tube with an outer diameter of 25 nm and an inner diameter of 15 nM. Alpha-beta heterodimers associate head-to-tail to form protofilaments running lengthwise along the microtubule wall with the beta-tubulin subunit facing the microtubule plus end conferring a structural polarity. Microtubules usually have 13 protofilaments but different protofilament numbers can be found in some organisms and specialized cells. The cofactor is Mg(2+).

The protein localises to the cytoplasm. The protein resides in the cytoskeleton. In terms of biological role, tubulin is the major constituent of microtubules, a cylinder consisting of laterally associated linear protofilaments composed of alpha- and beta-tubulin heterodimers. Microtubules grow by the addition of GTP-tubulin dimers to the microtubule end, where a stabilizing cap forms. Below the cap, tubulin dimers are in GDP-bound state, owing to GTPase activity of alpha-tubulin. This Geotrichum candidum (Oospora lactis) protein is Tubulin beta-2 chain.